Reading from the N-terminus, the 67-residue chain is Alpha-conotoxin-like Qc1.1a (67 aa).

The first 21 residues, 1 to 21 (MGMRMMFTMFLLVVLAITVVS), serve as a signal peptide directing secretion. The propeptide occupies 22–46 (FTSDHASDGRNTAANDKASNLMALR). Cystine bridges form between cysteine 49–cysteine 55 and cysteine 50–cysteine 63. Residues 51–53 (PDP) form a lacks the Ser-Xaa-Pro motif that is crucial for potent interaction with nAChR region.

This sequence belongs to the conotoxin A superfamily. Expressed by the venom duct.

The protein resides in the secreted. In terms of biological role, alpha-conotoxins act on postsynaptic membranes, they bind to the nicotinic acetylcholine receptors (nAChR) and thus inhibit them. Has possibly a distinct nAChR binding mode from other alpha-conotoxins, due to a different three residue motif (lacks the Ser-Xaa-Pro motif). The sequence is that of Alpha-conotoxin-like Qc1.1a from Conus quercinus (Oak cone).